The chain runs to 131 residues: Large ribosomal subunit protein eL32 (131 aa).

The protein belongs to the eukaryotic ribosomal protein eL32 family.

This Sulfurisphaera tokodaii (strain DSM 16993 / JCM 10545 / NBRC 100140 / 7) (Sulfolobus tokodaii) protein is Large ribosomal subunit protein eL32 (rpl32e).